The sequence spans 130 residues: MNTVSVVQFLAVGCAVFVLYGRGVFAAEGVKKAGQHKDAELCLGSDGLGHRLDEFWYNDDMCQRFLCFKDDEGIMYEQIANCPIAIAEGDCTLKPGTKGHYPDCSPRRRIAPLRTKKKGKFKRNAFYLPY.

A signal peptide spans 1–26; the sequence is MNTVSVVQFLAVGCAVFVLYGRGVFA.

Belongs to the scoloptoxin-16 family. Post-translationally, contains 3 disulfide bonds. In terms of tissue distribution, expressed by the venom gland.

The protein resides in the secreted. The protein is U-scoloptoxin(16)-Er4a of Ethmostigmus rubripes (Giant centipede).